Consider the following 808-residue polypeptide: Probable inorganic carbon transporter subunit DabA (808 aa).

C334, D336, H494, and C509 together coordinate Zn(2+).

It belongs to the inorganic carbon transporter (TC 9.A.2) DabA family. Forms a complex with DabB. Requires Zn(2+) as cofactor.

The protein resides in the cell inner membrane. In terms of biological role, part of an energy-coupled inorganic carbon pump. This chain is Probable inorganic carbon transporter subunit DabA, found in Allorhizobium ampelinum (strain ATCC BAA-846 / DSM 112012 / S4) (Agrobacterium vitis (strain S4)).